Reading from the N-terminus, the 101-residue chain is NADH-quinone oxidoreductase subunit K (101 aa).

3 helical membrane-spanning segments follow: residues 4–24, 30–50, and 61–81; these read LAHFLVLGAILFAISIVGIFL, IVLLMAIELMLLAVNINFVAF, and VFVFFILTVAAAESAIGLAIL.

This sequence belongs to the complex I subunit 4L family. NDH-1 is composed of 14 different subunits. Subunits NuoA, H, J, K, L, M, N constitute the membrane sector of the complex.

The protein localises to the cell inner membrane. The enzyme catalyses a quinone + NADH + 5 H(+)(in) = a quinol + NAD(+) + 4 H(+)(out). Functionally, NDH-1 shuttles electrons from NADH, via FMN and iron-sulfur (Fe-S) centers, to quinones in the respiratory chain. The immediate electron acceptor for the enzyme in this species is believed to be ubiquinone. Couples the redox reaction to proton translocation (for every two electrons transferred, four hydrogen ions are translocated across the cytoplasmic membrane), and thus conserves the redox energy in a proton gradient. This is NADH-quinone oxidoreductase subunit K from Cupriavidus necator (strain ATCC 17699 / DSM 428 / KCTC 22496 / NCIMB 10442 / H16 / Stanier 337) (Ralstonia eutropha).